A 23-amino-acid chain; its full sequence is U1-poneritoxin-Da3b (23 aa).

It belongs to the non-disulfide-bridged peptide (NDBP) superfamily. Medium-length antimicrobial peptide (group 3) family. Ponericin-W subfamily. Expressed by the venom gland.

It is found in the secreted. The protein localises to the target cell membrane. Functionally, may have antimicrobial properties, like most ant linear peptides. May act by disrupting the integrity of the bacterial cell membrane. This Dinoponera australis (Giant neotropical hunting ant) protein is U1-poneritoxin-Da3b.